The sequence spans 334 residues: Thiamine thiazole synthase (334 aa).

Substrate is bound by residues Cys86, 107–108, Gly115, and Val183; that span reads EA. At Cys221 the chain carries 2,3-didehydroalanine (Cys). Residues Asp223, His238, Met290, and 300-302 contribute to the substrate site; that span reads RMG.

This sequence belongs to the THI4 family. Homooctamer. The cofactor is Fe cation. Post-translationally, during the catalytic reaction, a sulfide is transferred from Cys-221 to a reaction intermediate, generating a dehydroalanine residue.

Its subcellular location is the cytoplasm. It is found in the nucleus. The enzyme catalyses [ADP-thiazole synthase]-L-cysteine + glycine + NAD(+) = [ADP-thiazole synthase]-dehydroalanine + ADP-5-ethyl-4-methylthiazole-2-carboxylate + nicotinamide + 3 H2O + 2 H(+). Involved in biosynthesis of the thiamine precursor thiazole. Catalyzes the conversion of NAD and glycine to adenosine diphosphate 5-(2-hydroxyethyl)-4-methylthiazole-2-carboxylic acid (ADT), an adenylated thiazole intermediate. The reaction includes an iron-dependent sulfide transfer from a conserved cysteine residue of the protein to a thiazole intermediate. The enzyme can only undergo a single turnover, which suggests it is a suicide enzyme. May have additional roles in adaptation to various stress conditions and in DNA damage tolerance. In Ajellomyces capsulatus (strain G186AR / H82 / ATCC MYA-2454 / RMSCC 2432) (Darling's disease fungus), this protein is Thiamine thiazole synthase.